Reading from the N-terminus, the 496-residue chain is Inosine-5'-monophosphate dehydrogenase (496 aa).

2 CBS domains span residues 96-152 (VIKD…TKKV) and 156-212 (MTKD…PQAA). NAD(+) is bound by residues D247 and 299–301 (GIG). K(+) contacts are provided by G301 and G303. An IMP-binding site is contributed by S304. C306 contributes to the K(+) binding site. The active-site Thioimidate intermediate is C306. IMP-binding positions include 339–341 (DGG), 362–363 (GS), and 386–390 (YRGMG). R405 (proton acceptor) is an active-site residue. Residue E423 coordinates IMP. E477, S478, and H479 together coordinate K(+).

It belongs to the IMPDH/GMPR family. In terms of assembly, homotetramer. It depends on K(+) as a cofactor.

It carries out the reaction IMP + NAD(+) + H2O = XMP + NADH + H(+). Its pathway is purine metabolism; XMP biosynthesis via de novo pathway; XMP from IMP: step 1/1. With respect to regulation, mycophenolic acid (MPA) is a non-competitive inhibitor that prevents formation of the closed enzyme conformation by binding to the same site as the amobile flap. In contrast, mizoribine monophosphate (MZP) is a competitive inhibitor that induces the closed conformation. MPA is a potent inhibitor of mammalian IMPDHs but a poor inhibitor of the bacterial enzymes. MZP is a more potent inhibitor of bacterial IMPDH. In terms of biological role, catalyzes the conversion of inosine 5'-phosphate (IMP) to xanthosine 5'-phosphate (XMP), the first committed and rate-limiting step in the de novo synthesis of guanine nucleotides, and therefore plays an important role in the regulation of cell growth. This is Inosine-5'-monophosphate dehydrogenase from Methanocaldococcus jannaschii (strain ATCC 43067 / DSM 2661 / JAL-1 / JCM 10045 / NBRC 100440) (Methanococcus jannaschii).